Consider the following 306-residue polypeptide: Probable cobalamin biosynthesis protein CobD (306 aa).

5 helical membrane-spanning segments follow: residues 54-74 (LFGF…AFEI), 88-108 (ISLY…IEFS), 155-175 (ITDS…PGAF), 207-227 (ILNF…APFY), and 286-306 (SLKA…ILFM).

This sequence belongs to the CobD/CbiB family.

It localises to the cell membrane. Its pathway is cofactor biosynthesis; adenosylcobalamin biosynthesis. In terms of biological role, converts cobyric acid to cobinamide by the addition of aminopropanol on the F carboxylic group. This is Probable cobalamin biosynthesis protein CobD from Methanococcus maripaludis (strain DSM 14266 / JCM 13030 / NBRC 101832 / S2 / LL).